We begin with the raw amino-acid sequence, 843 residues long: General transcription and DNA repair factor IIH helicase/translocase subunit XPB/SSL2 (843 aa).

The tract at residues methionine 1 to methionine 85 is disordered. Over residues serine 26–tyrosine 41 the composition is skewed to acidic residues. Basic and acidic residues predominate over residues aspartate 42–threonine 56. Basic residues predominate over residues lysine 64–arginine 74. Positions lysine 64–histidine 75 match the Nuclear localization signal motif. A Helicase ATP-binding domain is found at methionine 373–leucine 535. ATP is bound at residue leucine 386–threonine 393. The DEAH box motif lies at aspartate 488–histidine 491. A Helicase C-terminal domain is found at glutamine 589 to glutamate 743. Serine 752 carries the phosphoserine modification.

It belongs to the helicase family. RAD25/XPB subfamily. In terms of assembly, component of the 7-subunit TFIIH core complex composed of XPB/SSL2, XPD/RAD3, SSL1, TFB1, TFB2, TFB4 and TFB5, which is active in NER. The core complex associates with the 3-subunit CTD-kinase module TFIIK composed of CCL1, KIN28 and TFB3 to form the 10-subunit holoenzyme (holo-TFIIH) active in transcription. An additionnal subunit, TFB6, plays a role in the dissociation of the SSL2 helicase from TFIIH after transcription initiation. Interacts directly with TFB6. Requires Mg(2+) as cofactor.

The protein localises to the nucleus. The catalysed reaction is Couples ATP hydrolysis with the unwinding of duplex DNA by translocating in the 3'-5' direction.. It catalyses the reaction ATP + H2O = ADP + phosphate + H(+). In terms of biological role, ATP-dependent DNA translocase. Component of the general transcription and DNA repair factor IIH (TFIIH) core complex. When complexed to CDK-activating kinase (CAK), involved in RNA transcription by RNA polymerase II. May have 3'-5' helicase activity alone, the TFIIH core however has no 3'-5' helicase activity. Also involved in transcription-coupled nucleotide excision repair (NER) of damaged DNA. In NER, TFIIH acts by opening DNA around the lesion to allow the excision of the damaged oligonucleotide and its replacement by a new DNA fragment. The ATPase activity of XPB/SSL2, but not its helicase activity, is required for DNA opening. In transcription, TFIIH has an essential role in transcription initiation. When the pre-initiation complex (PIC) has been established, TFIIH is required for promoter opening and promoter escape. The ATP-dependent helicase activity of XPB/SSL2 is required for promoter opening and promoter escape. XPB/SSL2 acts as a double-stranded DNA translocase, promoting DNA opening by tracking in a 5'-3' dirction along the nontemplate promoter strand, rotating and inserting DNA into the Pol II active site cleft, leading to DNA unwinding. A dsDNA-stimulated ATPase, dATP and ATP are equally good substrates. May also use this translocase mechanism during DNA repair rather than physically wedging open damaged DNA. The chain is General transcription and DNA repair factor IIH helicase/translocase subunit XPB/SSL2 from Saccharomyces cerevisiae (strain ATCC 204508 / S288c) (Baker's yeast).